The chain runs to 902 residues: Probable leucine--tRNA ligase, mitochondrial (902 aa).

K67 is subject to N6-acetyllysine. The 'HIGH' region signature appears at 91–101 (YPSGKLHMGHV). Position 235 is an N6-acetyllysine (K235). A 'KMSKS' region motif is present at residues 638-642 (KMSKS). K641 contributes to the ATP binding site.

The protein belongs to the class-I aminoacyl-tRNA synthetase family.

The protein localises to the mitochondrion matrix. The enzyme catalyses tRNA(Leu) + L-leucine + ATP = L-leucyl-tRNA(Leu) + AMP + diphosphate. This chain is Probable leucine--tRNA ligase, mitochondrial (Lars2), found in Mus musculus (Mouse).